Here is a 334-residue protein sequence, read N- to C-terminus: UstYa family oxidase aprY (334 aa).

A helical membrane pass occupies residues 55–75; it reads IWILLTITNLIILGITVSMIV. The N-linked (GlcNAc...) asparagine glycan is linked to Asn112. The HXXHC 1 motif lies at 185–189; sequence HQIHC. Asn214 carries an N-linked (GlcNAc...) asparagine glycan. The short motif at 223–227 is the HXXHC 2 element; the sequence is HLGHC. Residues 306 to 318 are compositionally biased toward basic and acidic residues; it reads SELGEKLGKHQKQ. The tract at residues 306 to 334 is disordered; the sequence is SELGEKLGKHQKQEGVLGQAGHQHTKRHE.

The protein belongs to the ustYa family.

The protein resides in the membrane. The protein operates within secondary metabolite biosynthesis. Functionally, ustYa family oxidase; part of the gene cluster that mediates the biosynthesis of the asperipin-2a, a bicyclic peptide that possesses two macrocyclic ether rings consisting of 14- and 17-membered paracyclophans. Within the pathway, aprY is responsible for the synthesis of the bicyclic structure of asperipin-2a. The pathway starts with the processing of the precursor aprA by kexin proteases to produce 11 identical copies of the hexapeptide Phe-Tyr-Tyr-Thr-Gly-Tyr. Macrocyclization of asperipin-2a may accompany an alpha-hydroxylation-dehydration sequence to give an imine, which is readily hydrolyzed to yield putative ketone intermediate. The reductase aprR may be required for the final reduction to yield asperipin-2a. The chain is UstYa family oxidase aprY from Aspergillus flavus (strain ATCC 200026 / FGSC A1120 / IAM 13836 / NRRL 3357 / JCM 12722 / SRRC 167).